A 141-amino-acid chain; its full sequence is Large ribosomal subunit protein uL16 (141 aa).

This sequence belongs to the universal ribosomal protein uL16 family. In terms of assembly, part of the 50S ribosomal subunit.

In terms of biological role, binds 23S rRNA and is also seen to make contacts with the A and possibly P site tRNAs. The polypeptide is Large ribosomal subunit protein uL16 (Sulfurimonas denitrificans (strain ATCC 33889 / DSM 1251) (Thiomicrospira denitrificans (strain ATCC 33889 / DSM 1251))).